Reading from the N-terminus, the 409-residue chain is uncharacterized protein (409 aa).

A run of 10 helical transmembrane segments spans residues 62–82 (FSLGIAAEAVLFIFALWWVWI), 100–120 (LLLFTLMFFGIVMAIALPEAF), 123–143 (MGLLFAVAYSAMQVSRSLFAL), 152–172 (ASFMTFFRITAWLTISSTFWI), 183–203 (VVLWIVALVVEYTGPTVRYWV), 252–272 (GTPWVLCFSFLTTVLMWWIYF), 293–313 (AQYLFTYGHLPIVGGIIFTAV), 328–348 (YNFALAQLGGPILFLAGTMWM), 355–375 (VLPYSHVFGISLLTASFTLVP), and 376–396 (FVANFAIQALTGVILLVVAVW).

Its subcellular location is the cell membrane. This is an uncharacterized protein from Rhizobium meliloti (strain 1021) (Ensifer meliloti).